The primary structure comprises 623 residues: Low affinity potassium transport system protein Kup (623 aa).

12 consecutive transmembrane segments (helical) span residues 9–29, 49–69, 101–121, 137–157, 163–183, 212–232, 247–267, 276–296, 337–357, 363–383, 395–415, and 419–439; these read LPAITLAAIGVVYGDIGTSPL, VFGFLSLIFWLLVFVVSFKYL, VLVILGLIGGSFFYGEVVITP, PSLDPYIVPLSIVVLTLLFMI, GMVGKLFAPIMLAWFLVLAVL, AVSFAALGAVVLSITGVEALY, WFSVVLPSLVLNYFGQGALLL, PFFLLAPDWALIPMLILATLA, IYIPVVNWLLYFAVVIVIVSF, LAAAYGIAVTGTMVLTSILFA, ILVGLMVVAFLCVDVPLFSAN, and LFSGGWLPLSLGLVMFIIMTT.

This sequence belongs to the HAK/KUP transporter (TC 2.A.72) family.

The protein resides in the cell inner membrane. It carries out the reaction K(+)(in) + H(+)(in) = K(+)(out) + H(+)(out). Its function is as follows. Responsible for the low-affinity transport of potassium into the cell. Likely operates as a K(+):H(+) symporter. This chain is Low affinity potassium transport system protein Kup, found in Cronobacter sakazakii (strain ATCC BAA-894) (Enterobacter sakazakii).